The primary structure comprises 31 residues: Cycloviolacin-O6 (31 aa).

A cross-link (cyclopeptide (Gly-Asn)) is located at residues 1–31 (GTLPCGESCVWIPCISAAVGCSCKSKVCYKN). Intrachain disulfides connect C5–C21, C9–C23, and C14–C28.

This is a cyclic peptide.

Functionally, probably participates in a plant defense mechanism. In Viola odorata (Sweet violet), this protein is Cycloviolacin-O6.